The sequence spans 394 residues: Elongation factor Tu 2 (394 aa).

In terms of domain architecture, tr-type G spans 10 to 204; the sequence is KPHVNVGTIG…ALDSYIPEPE (195 aa). The G1 stretch occupies residues 19–26; that stretch reads GHVDHGKT. GTP is bound at residue 19–26; sequence GHVDHGKT. Thr-26 lines the Mg(2+) pocket. The interval 60 to 64 is G2; the sequence is GITIS. The segment at 81 to 84 is G3; sequence DCPG. Residues 81–85 and 136–139 each bind GTP; these read DCPGH and NKCD. The segment at 136–139 is G4; the sequence is NKCD. The tract at residues 174–176 is G5; that stretch reads SAL.

The protein belongs to the TRAFAC class translation factor GTPase superfamily. Classic translation factor GTPase family. EF-Tu/EF-1A subfamily. As to quaternary structure, monomer.

It is found in the cytoplasm. The enzyme catalyses GTP + H2O = GDP + phosphate + H(+). GTP hydrolase that promotes the GTP-dependent binding of aminoacyl-tRNA to the A-site of ribosomes during protein biosynthesis. This chain is Elongation factor Tu 2, found in Photorhabdus laumondii subsp. laumondii (strain DSM 15139 / CIP 105565 / TT01) (Photorhabdus luminescens subsp. laumondii).